The sequence spans 555 residues: Potassium-transporting ATPase potassium-binding subunit (555 aa).

A run of 10 helical transmembrane segments spans residues 2–22 (IWVAVVITMLLFILVAKPTGI), 60–80 (QYALSLVLLNGFMIVVVYFVF), 130–150 (IGITFLMFAAPATTLALVMAF), 173–193 (VFLPIAFMAALVFVALGVPQT), 246–266 (MSNILQMMLMMLLPTALPFTY), 278–298 (ILFVSLFMVFLLGFITITTSE), 374–394 (AGFVNIIMYAIIAVFISGLMV), 412–432 (LIAVTILFHPLLILGFSALAL), 483–503 (LVMFLGRYFSLITMLAVAASL), and 525–545 (GIFIGTIVIVGALTFFPMLVL).

The protein belongs to the KdpA family. In terms of assembly, the system is composed of three essential subunits: KdpA, KdpB and KdpC.

The protein localises to the cell membrane. In terms of biological role, part of the high-affinity ATP-driven potassium transport (or Kdp) system, which catalyzes the hydrolysis of ATP coupled with the electrogenic transport of potassium into the cytoplasm. This subunit binds the extracellular potassium ions and delivers the ions to the membrane domain of KdpB through an intramembrane tunnel. In Bacillus cereus (strain ATCC 10987 / NRS 248), this protein is Potassium-transporting ATPase potassium-binding subunit.